The chain runs to 136 residues: Ciliary microtubule inner protein 1 (136 aa).

Its subcellular location is the cell projection. The protein resides in the cilium. In Mus musculus (Mouse), this protein is Ciliary microtubule inner protein 1 (Cimip1).